Reading from the N-terminus, the 143-residue chain is Transcription antitermination protein NusB (143 aa).

This sequence belongs to the NusB family.

In terms of biological role, involved in transcription antitermination. Required for transcription of ribosomal RNA (rRNA) genes. Binds specifically to the boxA antiterminator sequence of the ribosomal RNA (rrn) operons. The polypeptide is Transcription antitermination protein NusB (Dehalococcoides mccartyi (strain CBDB1)).